Consider the following 232-residue polypeptide: Large ribosomal subunit protein uL1 (232 aa).

This sequence belongs to the universal ribosomal protein uL1 family. Part of the 50S ribosomal subunit.

In terms of biological role, binds directly to 23S rRNA. The L1 stalk is quite mobile in the ribosome, and is involved in E site tRNA release. Functionally, protein L1 is also a translational repressor protein, it controls the translation of the L11 operon by binding to its mRNA. This Roseobacter denitrificans (strain ATCC 33942 / OCh 114) (Erythrobacter sp. (strain OCh 114)) protein is Large ribosomal subunit protein uL1.